We begin with the raw amino-acid sequence, 1527 residues long: Peroxidasin (1527 aa).

An N-terminal signal peptide occupies residues 1–23 (MRFMLLMLQLLGLLLLLAGGVQS). Residues 24 to 53 (VYCPAGCTCLERTVRCIRAKLSAVPKLPQD) form the LRRNT domain. LRR repeat units lie at residues 51-74 (PQDTQTLDLRFNHIEELPANAFSG), 75-98 (LAQLTTLFLNDNELAYLQDGALNG), 99-122 (LTALRFVYLNNNRLSRLPATIFQR), 124-146 (PRLEAIFLENNDIWQLPAGLFDN), 147-170 (LPRLNRLIMYNNKLTQLPVDGFNR), and 172-196 (NNLKRLRLDGNAIDCNCGVYSLWRR). 4 consecutive Ig-like C2-type domains span residues 236 to 322 (PQFL…QPVR), 365 to 453 (PHFT…ARIE), 458 to 545 (PEIL…ATIK), and 553 to 643 (PQLA…ALVT). 4 disulfide bridges follow: Cys257–Cys307, Cys388–Cys437, Cys479–Cys529, and Cys574–Cys627. Residue Asn419 is glycosylated (N-linked (GlcNAc...) asparagine). Residues Asn616, Asn673, Asn682, Asn731, and Asn767 are each glycosylated (N-linked (GlcNAc...) asparagine). Cys768 and Cys784 form a disulfide bridge. Asp862 is a heme b binding site. His863 functions as the Proton acceptor in the catalytic mechanism. Asp864 serves as a coordination point for Ca(2+). Intrachain disulfides connect Cys882–Cys892 and Cys886–Cys909. Positions 941, 943, 945, and 947 each coordinate Ca(2+). Asn962 is a glycosylation site (N-linked (GlcNAc...) asparagine). The cysteines at positions 994 and 1005 are disulfide-linked. Residues Glu1015 and His1109 each coordinate heme b. N-linked (GlcNAc...) asparagine glycosylation is found at Asn1120 and Asn1213. 2 disulfide bridges follow: Cys1212-Cys1269 and Cys1310-Cys1336. Residues 1403–1441 (NEERVSGLEELIGSFQKELKKLHKKLRKLEDSCNSADSE) are a coiled coil. The region spanning 1463 to 1524 (SHCVDDKGTT…PPEACCPHCP (62 aa)) is the VWFC domain.

It belongs to the peroxidase family. XPO subfamily. In terms of assembly, homotrimer; disulfide-linked. Ca(2+) serves as cofactor. Heme b is required as a cofactor. In terms of tissue distribution, expressed in hemocytes. Also expressed in the fat body and gastric caeca.

It is found in the secreted. The enzyme catalyses (5R)-5-hydroxy-L-lysyl-[collagen] + L-methionyl-[collagen] + H2O2 = [collagen]-(5R)-5-hydroxy-L-lysyl-N-S-L-methionyl-[collagen] + 2 H2O + H(+). The catalysed reaction is bromide + H2O2 = hypobromite + H2O. It catalyses the reaction (5R)-5-hydroxy-L-lysyl-[collagen] + L-methionyl-[collagen] + hypobromite = [collagen]-(5R)-5-hydroxy-L-lysyl-N-S-L-methionyl-[collagen] + bromide + H2O + H(+). It carries out the reaction L-lysyl-[collagen] + L-methionyl-[collagen] + H2O2 = [collagen]-L-lysyl-N-S-L-methionyl-[collagen] + 2 H2O + H(+). The enzyme catalyses L-lysyl-[collagen] + L-methionyl-[collagen] + hypobromite = [collagen]-L-lysyl-N-S-L-methionyl-[collagen] + bromide + H2O + H(+). The catalysed reaction is L-tyrosyl-[protein] + bromide + H2O2 + H(+) = 3-bromo-L-tyrosyl-[protein] + 2 H2O. It catalyses the reaction hypobromite + L-tyrosyl-[protein] + H(+) = 3-bromo-L-tyrosyl-[protein] + H2O. Catalyzes the two-electron oxidation of bromide by hydrogen peroxide and generates hypobromite as a reactive intermediate which mediates the formation of sulfilimine cross-links between methionine and hydroxylysine residues within an uncross-linked collagen IV NC1 hexamer. Plays a role in extracellular matrix consolidation, phagocytosis and defense. This is Peroxidasin from Drosophila melanogaster (Fruit fly).